Reading from the N-terminus, the 317-residue chain is Adenine deaminase (317 aa).

3 residues coordinate Zn(2+): His14, His16, and His194. The active-site Proton donor is the Glu197. Asp275 provides a ligand contact to Zn(2+). Residue Asp276 participates in substrate binding.

The protein belongs to the metallo-dependent hydrolases superfamily. Adenosine and AMP deaminases family. Adenine deaminase type 2 subfamily. It depends on Zn(2+) as a cofactor.

The enzyme catalyses adenine + H2O + H(+) = hypoxanthine + NH4(+). In terms of biological role, catalyzes the hydrolytic deamination of adenine to hypoxanthine. Plays an important role in the purine salvage pathway and in nitrogen catabolism. This Pseudomonas savastanoi pv. phaseolicola (strain 1448A / Race 6) (Pseudomonas syringae pv. phaseolicola (strain 1448A / Race 6)) protein is Adenine deaminase.